The following is a 1357-amino-acid chain: DNA-directed RNA polymerase subunit beta (1357 aa).

This sequence belongs to the RNA polymerase beta chain family. The RNAP catalytic core consists of 2 alpha, 1 beta, 1 beta' and 1 omega subunit. When a sigma factor is associated with the core the holoenzyme is formed, which can initiate transcription.

The catalysed reaction is RNA(n) + a ribonucleoside 5'-triphosphate = RNA(n+1) + diphosphate. DNA-dependent RNA polymerase catalyzes the transcription of DNA into RNA using the four ribonucleoside triphosphates as substrates. This chain is DNA-directed RNA polymerase subunit beta, found in Pseudomonas fluorescens (strain SBW25).